A 184-amino-acid polypeptide reads, in one-letter code: Adenine phosphoribosyltransferase (184 aa).

This sequence belongs to the purine/pyrimidine phosphoribosyltransferase family. As to quaternary structure, homodimer.

The protein localises to the cytoplasm. It carries out the reaction AMP + diphosphate = 5-phospho-alpha-D-ribose 1-diphosphate + adenine. It functions in the pathway purine metabolism; AMP biosynthesis via salvage pathway; AMP from adenine: step 1/1. In terms of biological role, catalyzes a salvage reaction resulting in the formation of AMP, that is energically less costly than de novo synthesis. This chain is Adenine phosphoribosyltransferase, found in Blochmanniella pennsylvanica (strain BPEN).